Consider the following 912-residue polypeptide: Transcription factor bHLH140 (912 aa).

Residues 1–57 (MDDFNLRSENPNSSSTTSSSSSSFHRHKSETGNTKRSRSTSTLSTDPQSVAARDRRH) are disordered. Over residues 13-23 (SSSTTSSSSSS) the composition is skewed to low complexity. Positions 43 to 92 (LSTDPQSVAARDRRHRISDRFKILQSMVPGGAKMDTVSMLDEAISYVKFL) constitute a bHLH domain. 234–241 (GPPGSGKS) provides a ligand contact to ATP. The Macro domain occupies 511–690 (KAKASQKNID…KYKGSQDKAV (180 aa)). Over residues 657 to 666 (PKRSSQTAVS) the composition is skewed to polar residues. The segment at 657–706 (PKRSSQTAVSDSGEDIKEDSERNKKYKGSQDKAVTNNLESESLEDTRGSG) is disordered. An HIT domain is found at 720–829 (LHSIAMHPER…SQDFNSDSLK (110 aa)). The segment at 870 to 893 (LRCNRCRSAHPNIPKLKSHVRSCH) adopts a C2H2-type zinc-finger fold.

In terms of assembly, homodimer.

It is found in the nucleus. The sequence is that of Transcription factor bHLH140 (BHLH140) from Arabidopsis thaliana (Mouse-ear cress).